Here is a 305-residue protein sequence, read N- to C-terminus: Ornithine carbamoyltransferase, catabolic (305 aa).

Residues serine 50–threonine 53, glutamine 77, arginine 101, and histidine 128–glutamine 131 contribute to the carbamoyl phosphate site. L-ornithine is bound by residues asparagine 159, aspartate 223, and serine 227–methionine 228. Carbamoyl phosphate-binding positions include cysteine 263 to leucine 264 and arginine 291.

This sequence belongs to the aspartate/ornithine carbamoyltransferase superfamily. OTCase family.

The protein localises to the cytoplasm. It carries out the reaction carbamoyl phosphate + L-ornithine = L-citrulline + phosphate + H(+). It participates in amino-acid degradation; L-arginine degradation via ADI pathway; carbamoyl phosphate from L-arginine: step 2/2. In terms of biological role, reversibly catalyzes the transfer of the carbamoyl group from carbamoyl phosphate (CP) to the N(epsilon) atom of ornithine (ORN) to produce L-citrulline. In Thermoplasma volcanium (strain ATCC 51530 / DSM 4299 / JCM 9571 / NBRC 15438 / GSS1), this protein is Ornithine carbamoyltransferase, catabolic.